The following is a 451-amino-acid chain: Chromosomal replication initiator protein DnaA (451 aa).

Positions 1–71 (MSEQEIWKKV…QTIMKDVIGY (71 aa)) are domain I, interacts with DnaA modulators. The segment at 71–112 (YEVEPKFFTAEQLAELDETSRKSNTPSEPQRQIIEYGHEGTD) is domain II. Positions 113–329 (QFNTHNTFDT…GALTRLLAYS (217 aa)) are domain III, AAA+ region. 4 residues coordinate ATP: Gly-157, Gly-159, Lys-160, and Thr-161. The interval 330–451 (KLQGRPITTE…EDLEKEIRNQ (122 aa)) is domain IV, binds dsDNA.

Belongs to the DnaA family. As to quaternary structure, oligomerizes as a right-handed, spiral filament on DNA at oriC.

It localises to the cytoplasm. Plays an essential role in the initiation and regulation of chromosomal replication. ATP-DnaA binds to the origin of replication (oriC) to initiate formation of the DNA replication initiation complex once per cell cycle. Binds the DnaA box (a 9 base pair repeat at the origin) and separates the double-stranded (ds)DNA. Forms a right-handed helical filament on oriC DNA; dsDNA binds to the exterior of the filament while single-stranded (ss)DNA is stabiized in the filament's interior. The ATP-DnaA-oriC complex binds and stabilizes one strand of the AT-rich DNA unwinding element (DUE), permitting loading of DNA polymerase. After initiation quickly degrades to an ADP-DnaA complex that is not apt for DNA replication. Binds acidic phospholipids. This is Chromosomal replication initiator protein DnaA from Staphylococcus haemolyticus (strain JCSC1435).